We begin with the raw amino-acid sequence, 422 residues long: Platelet-activating factor acetylhydrolase (422 aa).

Positions 1–21 (MASLWVRARRVFMKSRASGFS) are cleaved as a signal peptide. S266 functions as the Nucleophile in the catalytic mechanism. The Charge relay system role is filled by D289. N331 carries N-linked (GlcNAc...) asparagine glycosylation. H345 (charge relay system) is an active-site residue.

It belongs to the AB hydrolase superfamily. Lipase family. In terms of tissue distribution, plasma.

The protein localises to the secreted. Its subcellular location is the extracellular space. It catalyses the reaction a 1-O-alkyl-2-acetyl-sn-glycero-3-phosphocholine + H2O = a 1-O-alkyl-sn-glycero-3-phosphocholine + acetate + H(+). In terms of biological role, modulates the action of platelet-activating factor (PAF) by hydrolyzing the sn-2 ester bond to yield the biologically inactive lyso-PAF. Has a specificity for substrates with a short residue at the sn-2 position. It is inactive against long-chain phospholipids. This chain is Platelet-activating factor acetylhydrolase (PLA2G7), found in Gallus gallus (Chicken).